A 530-amino-acid polypeptide reads, in one-letter code: uncharacterized protein (530 aa).

Basic and acidic residues-rich tracts occupy residues 1 to 11 and 28 to 38; these read MTALNDTERAV and PRSEETASERP. The interval 1–38 is disordered; it reads MTALNDTERAVRNWTAGRPHRPAPMRPPRSEETASERP. At 1–50 the chain is on the cytoplasmic side; that stretch reads MTALNDTERAVRNWTAGRPHRPAPMRPPRSEETASERPSRYYPTWLPSRS. Residues 51–71 form a helical membrane-spanning segment; that stretch reads FIAAVIAIGGMQLLATMDSTV. The Extracellular segment spans residues 72 to 91; that stretch reads AIVALPKIQNELSLSDAGRS. Residues 92–112 form a helical membrane-spanning segment; sequence WVITAYVLTFGGLMLLGGRLG. Residues 113-119 are Cytoplasmic-facing; that stretch reads DTIGRKR. A helical membrane pass occupies residues 120–140; that stretch reads TFIVGVALFTISSVLCAVAWD. Over 141 to 150 the chain is Extracellular; the sequence is EATLVIARLS. Residues 151 to 171 traverse the membrane as a helical segment; the sequence is QGVGSAIASPTGLALVATTFP. Topologically, residues 172–180 are cytoplasmic; sequence KGPARNAAT. A helical membrane pass occupies residues 181–201; that stretch reads AVFAAMTAIGSVMGLVVGGAL. Over 202–203 the chain is Extracellular; it reads TE. Residues 204–224 form a helical membrane-spanning segment; that stretch reads VSWRWAFLVNVPIGLVMIYLA. Over 225–239 the chain is Cytoplasmic; the sequence is RTALRETNKERMKLD. A helical membrane pass occupies residues 240 to 260; it reads ATGAILATLACTAAVFAFSIG. The Extracellular segment spans residues 261-266; sequence PEKGWM. A helical membrane pass occupies residues 267–287; it reads SGITIGSGLVALAAAVAFVIV. At 288-306 the chain is on the cytoplasmic side; it reads ERTAENPVVPFHLFRDRNR. The helical transmembrane segment at 307–327 threads the bilayer; sequence LVTFSAILLAGGVMFSLTVCI. At 328–343 the chain is on the extracellular side; sequence GLYVQDILGYSALRAG. A helical membrane pass occupies residues 344 to 364; it reads VGFIPFVIAMGIGLGVSSQLV. Residues 365–370 lie on the Cytoplasmic side of the membrane; sequence SRFSPR. The helical transmembrane segment at 371–391 threads the bilayer; sequence VLTIGGGYLLFGAMLYGSFFM. Topologically, residues 392–400 are extracellular; it reads HRGVPYFPN. Residues 401-421 traverse the membrane as a helical segment; sequence LVMPIVVGGIGIGMAVVPLTL. Residues 422 to 437 lie on the Cytoplasmic side of the membrane; that stretch reads SAIAGVGFDQIGPVSA. Residues 438–458 form a helical membrane-spanning segment; sequence IALMLQSLGGPLVLAVIQAVI. Residues 459–488 are Extracellular-facing; the sequence is TSRTLYLGGTTGPVKFMNDVQLAALDHAYT. A helical transmembrane segment spans residues 489–509; sequence YGLLWVAGAAIIVGGMALFIG. Topologically, residues 510–530 are cytoplasmic; sequence YTPQQVAHAQEVKEAIDAGEL.

Belongs to the major facilitator superfamily.

The protein resides in the cell membrane. This is an uncharacterized protein from Mycobacterium tuberculosis (strain CDC 1551 / Oshkosh).